A 27-amino-acid polypeptide reads, in one-letter code: Protamine-A (27 aa).

The disordered stretch occupies residues 1–27 (ARRRRRHASTKLKRRRRRRRHGKKSHK).

Testis.

It is found in the nucleus. It localises to the chromosome. In terms of biological role, protamines substitute for histones in the chromatin of sperm during the haploid phase of spermatogenesis. They compact sperm DNA into a highly condensed, stable and inactive complex. In Acipenser stellatus (Sevruga), this protein is Protamine-A.